Consider the following 128-residue polypeptide: Small ribosomal subunit protein uS11 (128 aa).

Belongs to the universal ribosomal protein uS11 family. As to quaternary structure, part of the 30S ribosomal subunit. Interacts with proteins S7 and S18. Binds to IF-3.

Its function is as follows. Located on the platform of the 30S subunit, it bridges several disparate RNA helices of the 16S rRNA. Forms part of the Shine-Dalgarno cleft in the 70S ribosome. In Porphyromonas gingivalis (strain ATCC BAA-308 / W83), this protein is Small ribosomal subunit protein uS11.